A 267-amino-acid polypeptide reads, in one-letter code: Phosphonoacetaldehyde hydrolase (267 aa).

Residue Asp-10 is the Nucleophile of the active site. Mg(2+) contacts are provided by Asp-10 and Ala-12. Lys-51 serves as the catalytic Schiff-base intermediate with substrate. Mg(2+) is bound at residue Asp-184.

Belongs to the HAD-like hydrolase superfamily. PhnX family. As to quaternary structure, homodimer. The cofactor is Mg(2+).

The enzyme catalyses phosphonoacetaldehyde + H2O = acetaldehyde + phosphate + H(+). Its function is as follows. Involved in phosphonate degradation. The polypeptide is Phosphonoacetaldehyde hydrolase (Paraburkholderia phytofirmans (strain DSM 17436 / LMG 22146 / PsJN) (Burkholderia phytofirmans)).